A 341-amino-acid chain; its full sequence is Probable sulfurtransferase (341 aa).

Zn(2+)-binding residues include Cys40, Cys42, Cys58, and Cys61. Gly88 serves as a coordination point for ATP. Residues Cys176 and Cys179 each coordinate [4Fe-4S] cluster. ATP is bound by residues Arg183 and Gly202. Cys267 contributes to the [4Fe-4S] cluster binding site. Cys316, Cys319, Cys328, and Cys331 together coordinate Zn(2+).

This sequence belongs to the TtcA family. It depends on [4Fe-4S] cluster as a cofactor. Mg(2+) serves as cofactor.

The protein is Probable sulfurtransferase of Methanocaldococcus jannaschii (strain ATCC 43067 / DSM 2661 / JAL-1 / JCM 10045 / NBRC 100440) (Methanococcus jannaschii).